A 455-amino-acid polypeptide reads, in one-letter code: Ammonium transporter Rh type B (455 aa).

Over 1 to 13 (MAWSPRHSAGRRL) the chain is Cytoplasmic. The chain crosses the membrane as a helical span at residues 14 to 34 (QLPLLCLLLQGATAILFAVFV). Residues 35–61 (RYNRETDAALWHWGNHSNADNEFYFRY) are Extracellular-facing. N49 carries N-linked (GlcNAc...) asparagine glycosylation. A helical transmembrane segment spans residues 62 to 82 (PSFQDVHAMIFVGFGFLMVFL). The Cytoplasmic portion of the chain corresponds to 83 to 86 (QRYG). Residues 87–107 (FGSVGFTFLLAAFALQWSTLI) traverse the membrane as a helical segment. Topologically, residues 108–124 (QGFFHSFRGGYILVGME) are extracellular. Residues 125–145 (SMINADFCAGAVLISFGAVLG) traverse the membrane as a helical segment. The Cytoplasmic segment spans residues 146 to 151 (KTGPVQ). The helical transmembrane segment at 152-172 (LLLMALLEVVLFGLNEFVLLS) threads the bilayer. Residues 173-179 (LLEVKDA) are Extracellular-facing. Residues 180-200 (GGSMTIHTFGAYFGLILSRVL) form a helical membrane-spanning segment. Topologically, residues 201–219 (YRPQLEKSKHRQGSVYHSD) are cytoplasmic. The chain crosses the membrane as a helical span at residues 220–240 (LFAMIGTIFLWIFWPSFNSAP). Topologically, residues 241–253 (TALGDGQHRTALN) are extracellular. A helical transmembrane segment spans residues 254–274 (TYYSLTASTLSTFALSALVGG). The Cytoplasmic segment spans residues 275 to 277 (DGR). A helical membrane pass occupies residues 278–298 (LDMVHVQNAALAGGVVVGTSA). E299 is a topological domain (extracellular). The chain crosses the membrane as a helical span at residues 300–320 (MMLTPFGALAAGFLAGAISTL). The Cytoplasmic portion of the chain corresponds to 321 to 343 (GYKFVTPILESKLKVQDTCGVHN). Residues 344–364 (LHGMPGVLGALLGGLVAGLAT) traverse the membrane as a helical segment. Topologically, residues 365 to 393 (REAYGDGLESVFPLIAEGQRSATSQAMHQ) are extracellular. The helical transmembrane segment at 394–414 (LFGLFVTLTFASVGGGLGGLL) threads the bilayer. The Cytoplasmic segment spans residues 415-455 (LRLPILDSPPDSQCYEDQIYWEVPGEHEHLAQGSEETETQA). The interval 416–424 (RLPILDSPP) is interaction with ANK3. The Basolateral sorting signal motif lies at 429–432 (YEDQ).

The protein belongs to the ammonium transporter (TC 2.A.49) family. Rh subfamily. As to quaternary structure, interacts (via C-terminus) with ANK2 and ANK3; required for targeting to the basolateral membrane. N-glycosylated.

Its subcellular location is the cell membrane. The protein resides in the basolateral cell membrane. It catalyses the reaction NH4(+)(in) = NH4(+)(out). It carries out the reaction methylamine(out) = methylamine(in). The catalysed reaction is CO2(out) = CO2(in). Functionally, ammonium transporter involved in the maintenance of acid-base homeostasis. Transports ammonium and its related derivative methylammonium across the basolateral plasma membrane of epithelial cells likely contributing to renal transepithelial ammonia transport and ammonia metabolism. May transport either NH4(+) or NH3 ammonia species predominantly mediating an electrogenic NH4(+) transport. May act as a CO2 channel providing for renal acid secretion. The sequence is that of Ammonium transporter Rh type B (RHBG) from Bos taurus (Bovine).